The primary structure comprises 242 residues: HTH-type transcriptional regulator GadW (242 aa).

In terms of domain architecture, HTH araC/xylS-type spans 139–236; it reads GKVERLISFD…GVTPHQFAQH (98 aa). 2 consecutive DNA-binding regions (H-T-H motif) follow at residues 156–177 and 203–226; these read RDIAERMYTSESLIKKKLQDEN and LHTIAEKCGYSSTSYFINTFRQYY.

Homodimer.

Depending on the conditions (growth phase and medium), acts as a positive or negative regulator of gadA and gadBC. Repression occurs directly or via the repression of the expression of gadX. Activation occurs directly by the binding of GadW to the gadA and gadBC promoters. The protein is HTH-type transcriptional regulator GadW (gadW) of Escherichia coli (strain K12).